The following is a 1094-amino-acid chain: Potassium-transporting ATPase alpha chain 2 (1094 aa).

Positions 1–21 (MAGGAHRADRATGEERKEGGG) are enriched in basic and acidic residues. Residues 1-37 (MAGGAHRADRATGEERKEGGGRWRAPHSPSPPGPRGC) form a disordered region. Positions 28–37 (SPSPPGPRGC) are enriched in pro residues. At 56-157 (RYCTLLLFQR…NALTPPKQTP (102 aa)) the chain is on the cytoplasmic side. The helical transmembrane segment at 158–178 (EIIKFLKQMVGGFSILLWVGA) threads the bilayer. The Lumenal portion of the chain corresponds to 179 to 201 (VLCWIAFGIQYVSNPSASLDRVY). A helical transmembrane segment spans residues 202–222 (LGTVLAVVVILTGIFAYYQEA). At 223–358 (KSTNIMASFC…NEKTPIAIEI (136 aa)) the chain is on the cytoplasmic side. The tract at residues 286-305 (SSLTGESEPQSRSSGFTHEN) is disordered. A helical membrane pass occupies residues 359–378 (EHFVHIVAGVAVSVGILFFI). The Lumenal portion of the chain corresponds to 379 to 390 (IAVCMKYHVLDA). A helical transmembrane segment spans residues 391–408 (IIFLIAIIVANVPEGLLA). Over 409–842 (TVTVALSLTA…EEGRLIFDNL (434 aa)) the chain is Cytoplasmic. Aspartate 446 (4-aspartylphosphate intermediate) is an active-site residue. The Mg(2+) site is built by aspartate 787 and aspartate 791. A helical membrane pass occupies residues 843 to 862 (KKTIAYTLTKNIAELCPFLI). Residues 863 to 872 (YIILGLPLPI) are Lumenal-facing. The helical transmembrane segment at 873-893 (GTITLLFIDLGTDIIPSIALA) threads the bilayer. The Cytoplasmic portion of the chain corresponds to 894–913 (YEKAESDIMNRKPRHKKKDR). A helical membrane pass occupies residues 914–936 (LVNQQLAVYSYLHIGLMQALGAF). The Lumenal portion of the chain corresponds to 937–988 (LVYFTVYAQQGFRPTSLFHLRIAWDSDHLNDLEDNYGQEWTSYQRQYLEWTG). The chain crosses the membrane as a helical span at residues 989–1008 (YTAFFVGIMVQQIADLIIRK). At 1009–1022 (TRKNSIFKQGLFRN) the chain is on the cytoplasmic side. Serine 1013 carries the post-translational modification Phosphoserine; by PKA. A helical transmembrane segment spans residues 1023-1041 (KVIWVGIASQIIVALLLSY). Residues 1042 to 1056 (GLGSITALNFTMLKA) are Lumenal-facing. Residues 1057–1077 (QYWFVAVPHAILIWVYDEMRK) form a helical membrane-spanning segment. Topologically, residues 1078–1094 (LFIRLYPGSWWDKNMYY) are cytoplasmic.

The protein belongs to the cation transport ATPase (P-type) (TC 3.A.3) family. Type IIC subfamily. As to quaternary structure, the X(+)/K(+) ATPase pump is composed of a catalytic alpha subunit and an auxiliary non-catalytic beta subunit. The alpha subunit pairs with the beta subunit of gastric H(+)/K(+) ATPase ATP4B or the beta subunit of Na(+)/K(+) ATPases ATP1B1 and ATP1B3; this interaction is required for the formation of a functionally active pump and its targeting at the plasma membrane. Found in the skin, kidney, distal colon and brain. In the kidney it is found in the connecting tubule, cortical collecting duct and outer medullary collecting duct while in the brain it is specific to choroid plexus and cortex.

It is found in the apical cell membrane. It carries out the reaction K(+)(out) + ATP + H2O + H(+)(in) = K(+)(in) + ADP + phosphate + 2 H(+)(out). The enzyme catalyses K(+)(out) + Na(+)(in) + ATP + H2O = K(+)(in) + Na(+)(out) + ADP + phosphate + H(+). In terms of biological role, the catalytic subunit of a H(+)/K(+) ATPase and/or Na(+)/K(+) ATPase pump which transports K(+) ions in exchange for Na(+) and/or H(+) ions across the apical membrane of epithelial cells. Uses ATP as an energy source to pump K(+) ions into the cell while transporting Na(+) and/or H(+) ions to the extracellular compartment. Involved in the maintenance of electrolyte homeostasis through K(+) ion absorption in kidney and colon. In the airway epithelium, may play a primary role in mucus acidification regulating its viscosity and clearance. The chain is Potassium-transporting ATPase alpha chain 2 (ATP12A) from Oryctolagus cuniculus (Rabbit).